A 74-amino-acid polypeptide reads, in one-letter code: Arabinogalactan protein 20 (74 aa).

Residues 1–26 (MASRNSVAVIALFAFVFAVISPFAGA) form the signal peptide. A Pyrrolidone carboxylic acid modification is found at Gln27. 4-hydroxyproline occurs at positions 31, 33, and 35. O-linked (Ara...) hydroxyproline glycosylation is found at Pro31, Pro33, and Pro35. Ser37 carries the GPI-anchor amidated serine lipid modification. The propeptide at 38-74 (DGTSIDQGIAYLLMVVALVLTYLIHPLDASSSSYTFF) is removed in mature form.

It belongs to the AG-peptide AGP family. In terms of processing, contains 4-hydroxyproline; hydroxylated on Pro-31, Pro-33 and Pro-35. Post-translationally, O-glycosylated on hydroxyprolines; noncontiguous hydroxylproline residues are glycosylated with arabinogalactan.

Its subcellular location is the cell membrane. Its function is as follows. Proteoglycan that seems to be implicated in diverse developmental roles such as differentiation, cell-cell recognition, embryogenesis and programmed cell death. This is Arabinogalactan protein 20 from Arabidopsis thaliana (Mouse-ear cress).